The following is a 1065-amino-acid chain: DNA-directed RNA polymerase subunit beta (1065 aa).

It belongs to the RNA polymerase beta chain family. In plastids the minimal PEP RNA polymerase catalytic core is composed of four subunits: alpha, beta, beta', and beta''. When a (nuclear-encoded) sigma factor is associated with the core the holoenzyme is formed, which can initiate transcription.

The protein resides in the plastid. The protein localises to the chloroplast. It catalyses the reaction RNA(n) + a ribonucleoside 5'-triphosphate = RNA(n+1) + diphosphate. Its function is as follows. DNA-dependent RNA polymerase catalyzes the transcription of DNA into RNA using the four ribonucleoside triphosphates as substrates. The sequence is that of DNA-directed RNA polymerase subunit beta from Marchantia polymorpha (Common liverwort).